Consider the following 591-residue polypeptide: MSSTENPDSVAAAEELHALRVEAQVLRRQLAQSPEQVRELESKVDSLSIRNSKLMDTLKEARQQLIALREEVDRLGQPPSGYGVLLSVHEDKTVDVFTSGRKMRLTCSPNIDTDTLALGQTVRLNEALTIVEAGTYEQVGEISTLREVLDDGLRALVVGHADEERIVWLAAPLAAVFADPEADIIAYDADSPTRKLRPGDSLLVDTKAGYAFERIPKAEVEDLVLEEVPDVHYDDIGGLGRQIEQIRDAVELPFLHKDLFHEYSLRPPKGVLLYGPPGCGKTLIAKAVANSLAKKIAEARGQDSKDAKSYFLNIKGPELLNKFVGETERHIRMIFQRAREKASEGTPVIVFFDEMDSIFRTRGSGVSSDVETTVVPQLLSEIDGVEGLENVIVIGASNREDMIDPAILRPGRLDVKIKIERPDAESAQDIFSKYLVDGLPINADDLAEFGGDRTACLKAMIVRVVDRMYAESEENRFLEVTYANGDKEVLFFKDFNSGAMIQNIVDRAKKYAIKSVLDTGAPGLRVQHLFDSIVDEFAENEDLPNTTNPDDWARISGKKGERIVYIRTLVTGKNASASRAIDTESNTGQYL.

A coiled-coil region spans residues 10-77 (VAAAEELHAL…LREEVDRLGQ (68 aa)). 278–283 (GCGKTL) provides a ligand contact to ATP. Residues 590-591 (YL) form a docks into pockets in the proteasome alpha-ring region.

Belongs to the AAA ATPase family. In terms of assembly, homohexamer. Assembles into a hexameric ring structure that likely caps the 20S proteasome core. Can form a complex composed of two stacked hexameric rings in vitro. Probably interacts with the prokaryotic ubiquitin-like protein Pup through a hydrophobic interface; the expected interacting region of ARC lies in its N-terminal coiled-coil domain. There is likely one Pup binding site per ARC hexamer ring. Upon ATP-binding, the C-terminus of ARC probably interacts with the alpha-rings of the proteasome core, possibly by binding to the intersubunit pockets.

It participates in protein degradation; proteasomal Pup-dependent pathway. Its activity is regulated as follows. ATPase activity is inhibited by N-ethylmaleimide (NEM) but not by sodium azide. Functionally, ATPase which is responsible for recognizing, binding, unfolding and translocation of pupylated proteins into the bacterial 20S proteasome core particle. May be essential for opening the gate of the 20S proteasome via an interaction with its C-terminus, thereby allowing substrate entry and access to the site of proteolysis. Thus, the C-termini of the proteasomal ATPase may function like a 'key in a lock' to induce gate opening and therefore regulate proteolysis. This chain is Proteasome-associated ATPase, found in Rhodococcus erythropolis (Arthrobacter picolinophilus).